The chain runs to 280 residues: Pre-mRNA-splicing factor PRP21 (280 aa).

Residues 11–49 (DIKTTVNYIKQHGVEFENKLLEDERFSFIKKDDPLHEYY) form an SURP motif 1 repeat. The segment at 53 to 72 (MNEPTDTVSGEDNDRKSERE) is disordered. An SURP motif 2 repeat occupies 95 to 135 (VIKLTARYYAKDKSIVEQMISKDGEARLNFMNSSHPLHKTF). 2 stretches are compositionally biased toward basic and acidic residues: residues 246-261 (EKIVSDQGKQKGGDSK) and 269-280 (AVGETRLKKSKK). Residues 246–280 (EKIVSDQGKQKGGDSKGKKRKIRAVGETRLKKSKK) are disordered.

As to quaternary structure, belongs to the CWC complex (or CEF1-associated complex), a spliceosome sub-complex reminiscent of a late-stage spliceosome composed of the U2, U5 and U6 snRNAs and at least BUD13, BUD31, BRR2, CDC40, CEF1, CLF1, CUS1, CWC2, CWC15, CWC21, CWC22, CWC23, CWC24, CWC25, CWC27, ECM2, HSH155, IST3, ISY1, LEA1, MSL1, NTC20, PRP8, PRP9, PRP11, PRP19, PRP21, PRP22, PRP45, PRP46, SLU7, SMB1, SMD1, SMD2, SMD3, SMX2, SMX3, SNT309, SNU114, SPP2, SYF1, SYF2, RSE1 and YJU2.

It is found in the nucleus. In terms of biological role, mRNA splicing factors, PRP9, PRP11, and PRP21, are necessary for binding of the U2 snRNP to the pre-mRNA in an early step of spliceosome assembly. This chain is Pre-mRNA-splicing factor PRP21 (PRP21), found in Saccharomyces cerevisiae (strain ATCC 204508 / S288c) (Baker's yeast).